A 65-amino-acid chain; its full sequence is Large ribosomal subunit protein bL32 (65 aa).

This sequence belongs to the bacterial ribosomal protein bL32 family.

This chain is Large ribosomal subunit protein bL32, found in Metamycoplasma arthritidis (strain 158L3-1) (Mycoplasma arthritidis).